We begin with the raw amino-acid sequence, 302 residues long: Gap junction delta-2 protein (302 aa).

Topologically, residues 1 to 19 (MGEWTILERLLEAAVQQHS) are cytoplasmic. A helical transmembrane segment spans residues 20–42 (TMIGRILLTVVVIFRILVVAIVG). The Extracellular segment spans residues 43 to 75 (ETVYDDEQTMFVCNTLQPGCNQACYDKAFPISH). The chain crosses the membrane as a helical span at residues 76–98 (IRYWVFQIIMVCTPSLCFITYSV). The Cytoplasmic portion of the chain corresponds to 99–177 (HQSSKQRERQ…KIRRQEGISR (79 aa)). The chain crosses the membrane as a helical span at residues 178–200 (FYIIQVVFRNALEIGFLMGQYFL). Topologically, residues 201 to 232 (YGFKVPSMYECNRYPCVKMVECYVSRPTEKTV) are extracellular. A helical transmembrane segment spans residues 233 to 255 (FLVFMFAVSGLCVILNLAELNHL). Over 256 to 302 (GWRKIKTAVRGAQERRKSIYEIRNKDSPHRIGVPNFGRTQSSDSAYV) the chain is Cytoplasmic.

Belongs to the connexin family. Delta-type subfamily. A connexon is composed of a hexamer of connexins. In terms of tissue distribution, retinal specific.

The protein resides in the cell membrane. The protein localises to the cell junction. It is found in the gap junction. One gap junction consists of a cluster of closely packed pairs of transmembrane channels, the connexons, through which materials of low MW diffuse from one cell to a neighboring cell. The polypeptide is Gap junction delta-2 protein (Leucoraja erinaceus (Little skate)).